The primary structure comprises 308 residues: U-box domain-containing protein 54 (308 aa).

Residues 172–235 form a disordered region; sequence FSEFSTSAEK…NESDEDPRLE (64 aa). Over residues 210-227 the composition is skewed to basic and acidic residues; the sequence is ESPKKGRKETIEKSKSNE. Residues 232-306 enclose the U-box domain; it reads PRLEDFKCPI…KDWLEKNPNY (75 aa).

The catalysed reaction is S-ubiquitinyl-[E2 ubiquitin-conjugating enzyme]-L-cysteine + [acceptor protein]-L-lysine = [E2 ubiquitin-conjugating enzyme]-L-cysteine + N(6)-ubiquitinyl-[acceptor protein]-L-lysine.. It functions in the pathway protein modification; protein ubiquitination. Functions as an E3 ubiquitin ligase. The polypeptide is U-box domain-containing protein 54 (PUB54) (Arabidopsis thaliana (Mouse-ear cress)).